Here is a 771-residue protein sequence, read N- to C-terminus: DnaJ homolog subfamily C member 16 (771 aa).

The N-terminal stretch at 1–25 is a signal peptide; the sequence is MELKRLSISWQFLIVLVLILQSLSA. Over 26–532 the chain is Cytoplasmic; sequence LDFDPYRVLG…ESLLHSNWRE (507 aa). A J domain is found at 29–93; the sequence is DPYRVLGVSR…EKRTNYDHYG (65 aa). The region spanning 116–244 is the Thioredoxin domain; sequence FYFDESFFHF…LRQFVESLLP (129 aa). A helical; Anchor for type IV membrane protein transmembrane segment spans residues 533–553; sequence MMPLLSLIFSALFILFGTVIV. Residues 554-771 are Extracellular-facing; sequence QAFSDSNEER…FYIPSWPELD (218 aa). The interval 559-590 is disordered; the sequence is SNEERESHPPDKEEVPEKAGKTEPSFTKESSS. Residues 560-579 are compositionally biased toward basic and acidic residues; it reads NEERESHPPDKEEVPEKAGK. Residue Asn-628 is glycosylated (N-linked (GlcNAc...) asparagine).

The protein localises to the endoplasmic reticulum membrane. Its function is as follows. Plays an important role in regulating the size of autophagosomes during the formation process. The chain is DnaJ homolog subfamily C member 16 (Dnajc16) from Rattus norvegicus (Rat).